The following is a 218-amino-acid chain: Ribulose-phosphate 3-epimerase (218 aa).

Ser10 is a binding site for substrate. Residues His35, Asp37, and His68 each contribute to the a divalent metal cation site. Asp37 functions as the Proton acceptor in the catalytic mechanism. Residues His68, 144–147 (GFSG), 177–179 (DGG), and 199–200 (GS) contribute to the substrate site. Asp177 is a binding site for a divalent metal cation. Asp177 acts as the Proton donor in catalysis.

This sequence belongs to the ribulose-phosphate 3-epimerase family. Requires a divalent metal cation as cofactor.

It carries out the reaction D-ribulose 5-phosphate = D-xylulose 5-phosphate. The protein operates within carbohydrate degradation. Functionally, catalyzes the reversible epimerization of D-ribulose 5-phosphate to D-xylulose 5-phosphate. This Treponema pallidum (strain Nichols) protein is Ribulose-phosphate 3-epimerase.